Reading from the N-terminus, the 195-residue chain is ATP-dependent Clp protease proteolytic subunit (195 aa).

S99 serves as the catalytic Nucleophile. H124 is a catalytic residue.

The protein belongs to the peptidase S14 family. In terms of assembly, fourteen ClpP subunits assemble into 2 heptameric rings which stack back to back to give a disk-like structure with a central cavity, resembling the structure of eukaryotic proteasomes.

The protein resides in the cytoplasm. The enzyme catalyses Hydrolysis of proteins to small peptides in the presence of ATP and magnesium. alpha-casein is the usual test substrate. In the absence of ATP, only oligopeptides shorter than five residues are hydrolyzed (such as succinyl-Leu-Tyr-|-NHMec, and Leu-Tyr-Leu-|-Tyr-Trp, in which cleavage of the -Tyr-|-Leu- and -Tyr-|-Trp bonds also occurs).. Its function is as follows. Cleaves peptides in various proteins in a process that requires ATP hydrolysis. Has a chymotrypsin-like activity. Plays a major role in the degradation of misfolded proteins. In Coxiella burnetii (strain RSA 331 / Henzerling II), this protein is ATP-dependent Clp protease proteolytic subunit.